A 289-amino-acid polypeptide reads, in one-letter code: Pyridoxal kinase PdxY (289 aa).

Residues Ser9 and 44 to 45 (TQ) contribute to the substrate site. Residues Asp112, Val144, Glu149, and Lys182 each coordinate ATP. Asp221 is a substrate binding site.

This sequence belongs to the pyridoxine kinase family. PdxY subfamily. Homodimer. Requires Mg(2+) as cofactor.

It carries out the reaction pyridoxal + ATP = pyridoxal 5'-phosphate + ADP + H(+). Its pathway is cofactor metabolism; pyridoxal 5'-phosphate salvage; pyridoxal 5'-phosphate from pyridoxal: step 1/1. Pyridoxal kinase involved in the salvage pathway of pyridoxal 5'-phosphate (PLP). Catalyzes the phosphorylation of pyridoxal to PLP. The chain is Pyridoxal kinase PdxY from Vibrio campbellii (strain ATCC BAA-1116).